The chain runs to 1982 residues: Ras guanine nucleotide exchange factor V (1982 aa).

LRR repeat units follow at residues 1 to 26 (MGNI…SLEG), 47 to 68 (LTQL…ITNL), 69 to 94 (SNLS…PFKP), 105 to 128 (NENL…VFVL), 130 to 151 (NLKQ…LCGG), 164 to 187 (ACQL…IGDQ), 188 to 210 (LTTL…SFSN), 212 to 234 (VSLT…LCTL), 236 to 257 (KLVH…HTLG), 261 to 284 (LPSL…ILEI), 286 to 307 (SLRV…IGNL), 308 to 330 (LNLN…IGEL), 331 to 352 (INLR…EFSK), 354 to 376 (SKLN…LHSL), and 378 to 399 (QLLR…LIKS). Residues 1–1831 (MGNINSICLN…IANAFYELRN (1831 aa)) are Extracellular-facing. 3 disordered regions span residues 414–436 (YGST…STHG), 457–532 (NQIN…NKKQ), and 615–654 (NNSG…RRGS). Low complexity-rich tracts occupy residues 415 to 436 (GSTM…STHG) and 457 to 495 (NQIN…TPNG). An LRR 16 repeat occupies 443–466 (DILLSSVTLNNSILNQINNNNNNN). The segment covering 506–520 (LTISRSLFRGNSSNL) has biased composition (polar residues). Positions 515 to 567 (GNSSNLESEKEDFINKKQQQQQQQQQQQQQQQQQQQQQQQQQQQQQQQQQQLG) form a coiled coil. The stretch at 592 to 615 (EDDIQKMQLGLEALSNLETSIGSN) is one LRR 17 repeat. Residues 616–642 (NSGGGDSMNGSGGNINNSGGSGSGCGT) show a composition bias toward gly residues. 2 LRR repeats span residues 657–684 (LPPT…VMSG) and 773–796 (HSNL…LSSS). Disordered stretches follow at residues 756-778 (QSST…NLSQ) and 807-829 (LQFQ…SNQP). The GBD/FH3 domain maps to 832 to 1236 (TIVPSFSKFK…QIKYSIDRYG (405 aa)). 4 LRR repeats span residues 979 to 1003 (LLGI…GYCL), 1075 to 1100 (SPYV…VFKI), 1239 to 1263 (VPAI…RWVD), and 1689 to 1712 (VQNM…FVDL). Positions 1595–1717 (KDRRVSSVTL…LFVDLSTKSY (123 aa)) constitute an N-terminal Ras-GEF domain. The Ras-GEF domain maps to 1747-1974 (DEIEIARQLS…YEMSLSAEPR (228 aa)). The helical transmembrane segment at 1832–1848 (YHLLMAIISGLNASPVL) threads the bilayer. Over 1849 to 1982 (RLKYTKGKLS…PRNAERYDIQ (134 aa)) the chain is Cytoplasmic. 2 LRR repeats span residues 1865–1888 (LDTL…LAAA) and 1917–1941 (RINF…LFPY).

It localises to the membrane. Functionally, promotes the exchange of Ras-bound GDP by GTP. The polypeptide is Ras guanine nucleotide exchange factor V (gefV) (Dictyostelium discoideum (Social amoeba)).